The chain runs to 388 residues: Pentatricopeptide repeat-containing protein 2, mitochondrial (388 aa).

The stretch at Thr-166–Lys-200 is one PPR repeat. Ser-382 carries the post-translational modification Phosphoserine.

The protein belongs to the PTCD2 family.

The protein localises to the mitochondrion. In terms of biological role, involved in mitochondrial RNA maturation and mitochondrial respiratory chain function. The chain is Pentatricopeptide repeat-containing protein 2, mitochondrial (PTCD2) from Homo sapiens (Human).